The chain runs to 951 residues: Bifunctional glutamine synthetase adenylyltransferase/adenylyl-removing enzyme (951 aa).

The segment at 1-440 is adenylyl removase; the sequence is MLPLPSELQI…VFDDLIGDET (440 aa). The tract at residues 449 to 951 is adenylyl transferase; that stretch reads HGLYKSLWQD…WLAANDANVS (503 aa).

Belongs to the GlnE family. The cofactor is Mg(2+).

It carries out the reaction [glutamine synthetase]-O(4)-(5'-adenylyl)-L-tyrosine + phosphate = [glutamine synthetase]-L-tyrosine + ADP. The enzyme catalyses [glutamine synthetase]-L-tyrosine + ATP = [glutamine synthetase]-O(4)-(5'-adenylyl)-L-tyrosine + diphosphate. Functionally, involved in the regulation of glutamine synthetase GlnA, a key enzyme in the process to assimilate ammonia. When cellular nitrogen levels are high, the C-terminal adenylyl transferase (AT) inactivates GlnA by covalent transfer of an adenylyl group from ATP to specific tyrosine residue of GlnA, thus reducing its activity. Conversely, when nitrogen levels are low, the N-terminal adenylyl removase (AR) activates GlnA by removing the adenylyl group by phosphorolysis, increasing its activity. The regulatory region of GlnE binds the signal transduction protein PII (GlnB) which indicates the nitrogen status of the cell. The chain is Bifunctional glutamine synthetase adenylyltransferase/adenylyl-removing enzyme from Yersinia pestis bv. Antiqua (strain Antiqua).